Here is a 188-residue protein sequence, read N- to C-terminus: Elongation factor P (188 aa).

N6-(3,6-diaminohexanoyl)-5-hydroxylysine is present on K34.

The protein belongs to the elongation factor P family. Is beta-lysylated on the epsilon-amino group of Lys-34 by the combined action of EpmA and EpmB, and then hydroxylated on the C5 position of the same residue by EpmC. Lysylation is critical for the stimulatory effect of EF-P on peptide-bond formation. The lysylation moiety would extend toward the peptidyltransferase center and stabilize the terminal 3-CCA end of the tRNA. The hydroxylation of the C5 position on Lys-34 would allow additional potential stabilizing hydrogen-bond interactions with the P-tRNA.

It localises to the cytoplasm. Its pathway is protein biosynthesis; polypeptide chain elongation. Involved in peptide bond synthesis. Alleviates ribosome stalling that occurs when 3 or more consecutive Pro residues or the sequence PPG is present in a protein, possibly by augmenting the peptidyl transferase activity of the ribosome. Modification of Lys-34 is required for alleviation. This chain is Elongation factor P, found in Shigella boydii serotype 18 (strain CDC 3083-94 / BS512).